Consider the following 304-residue polypeptide: MLFEQIAANKRKTVFIILGFFIFVLMVGAAIGIIVWNNYLNGLILAAVIGAFYILIMVMSSSSVVMAMNHAKEVTSKEQAPVLWDTVESMAMVAGIPMPKVYIVEDPSPNAFATGISPEKGAVAVTRGLLNKLERYELEGVIAHEISHIRNYDIRLSTIAIALVAVIAILSDIAMRMIFWGSITGGRNSRKSDNNNGGGAQAIIYIVALIFVILAPIIATAIQFALSRNREYLADASAVELTRNPDGLIQALQKISGDSKKMEEVSASSESIYFSSPLKSKKNKPGLFDSHPPISSRIERLENM.

2 consecutive transmembrane segments (helical) span residues 14–34 (VFII…IGII) and 39–59 (YLNG…IMVM). His144 is a Zn(2+) binding site. Glu145 is an active-site residue. His148 lines the Zn(2+) pocket. The next 2 helical transmembrane spans lie at 159–179 (IAIA…RMIF) and 202–222 (AIIY…ATAI). Glu231 is a Zn(2+) binding site.

It belongs to the peptidase M48B family. It depends on Zn(2+) as a cofactor.

The protein resides in the cell membrane. The protein is Protease HtpX homolog of Listeria monocytogenes serotype 4a (strain HCC23).